Consider the following 45-residue polypeptide: MKFFSVVTVFVFGLLALANAVPLSPDPGNVVINGDCKYCNVHGGK.

The signal sequence occupies residues 1 to 20 (MKFFSVVTVFVFGLLALANA). Residues 21-27 (VPLSPDP) constitute a propeptide, removed by a dipeptidylpeptidase. Cys-36 and Cys-39 are disulfide-bonded. A Glycine amide modification is found at Gly-43.

Hemolymph (at protein level).

The protein localises to the secreted. In terms of biological role, secreted immune-induced peptide induced by Toll signaling. Has a role in resistance to bacterial and fungal infections. The protein is Bomanin Short 2 of Drosophila melanogaster (Fruit fly).